The following is a 471-amino-acid chain: Chitobiosyldiphosphodolichol beta-mannosyltransferase (471 aa).

Topologically, residues 1–31 are lumenal; that stretch reads MDTSSVTMHTERACCHQAQRAVAAMLDKAPS. Residues 32–52 form a helical membrane-spanning segment; it reads WLIWTAVLYVGLPFMLYWAVP. Residues 53–126 lie on the Cytoplasmic side of the membrane; it reads YLFYHNKTKS…ALPGASNAGK (74 aa). Residues 127–147 constitute an intramembrane region (helical); the sequence is SLGQTARKVVLQTCHIVRQLW. The Cytoplasmic segment spans residues 148 to 471; sequence ELRGCDYILI…MSELQVVRQS (324 aa).

It belongs to the glycosyltransferase group 1 family.

The protein resides in the endoplasmic reticulum membrane. The catalysed reaction is an N,N'-diacetylchitobiosyl-diphospho-di-trans,poly-cis-dolichol + GDP-alpha-D-mannose = a beta-D-Man-(1-&gt;4)-beta-D-GlcNAc-(1-&gt;4)-alpha-D-GlcNAc-diphospho-di-trans,poly-cis-dolichol + GDP + H(+). The protein operates within protein modification; protein glycosylation. Functionally, participates in the formation of the lipid-linked precursor oligosaccharide for N-glycosylation. Involved in assembling the dolichol-pyrophosphate-GlcNAc(2)-Man(5) intermediate on the cytoplasmic surface of the ER. This is Chitobiosyldiphosphodolichol beta-mannosyltransferase (ALG1) from Eremothecium gossypii (strain ATCC 10895 / CBS 109.51 / FGSC 9923 / NRRL Y-1056) (Yeast).